Here is a 112-residue protein sequence, read N- to C-terminus: MSEDSATVAVTDDSFSTDVLGSSKPVLVDFWATWCGPCKMVAPVLEEIAAEKGDQLTVAKIDVDVDANPATARDFQVVSIPTMILFKDGAPVKRIVGAKGKAALLRELSDAL.

The Thioredoxin domain occupies 2 to 112 (SEDSATVAVT…ALLRELSDAL (111 aa)). C35 and C38 are disulfide-bonded.

It belongs to the thioredoxin family.

In terms of biological role, participates in various redox reactions through the reversible oxidation of its active center dithiol to a disulfide and catalyzes dithiol-disulfide exchange reactions. In Mycolicibacterium smegmatis (Mycobacterium smegmatis), this protein is Thioredoxin (trxA).